The chain runs to 272 residues: Putative phosphoenolpyruvate synthase regulatory protein (272 aa).

An ADP-binding site is contributed by 151–158 (GVSRSGKT).

Belongs to the pyruvate, phosphate/water dikinase regulatory protein family. PSRP subfamily.

The catalysed reaction is [pyruvate, water dikinase] + ADP = [pyruvate, water dikinase]-phosphate + AMP + H(+). It catalyses the reaction [pyruvate, water dikinase]-phosphate + phosphate + H(+) = [pyruvate, water dikinase] + diphosphate. Functionally, bifunctional serine/threonine kinase and phosphorylase involved in the regulation of the phosphoenolpyruvate synthase (PEPS) by catalyzing its phosphorylation/dephosphorylation. This Desulfotalea psychrophila (strain LSv54 / DSM 12343) protein is Putative phosphoenolpyruvate synthase regulatory protein.